Reading from the N-terminus, the 159-residue chain is SsrA-binding protein (159 aa).

Belongs to the SmpB family.

Its subcellular location is the cytoplasm. In terms of biological role, required for rescue of stalled ribosomes mediated by trans-translation. Binds to transfer-messenger RNA (tmRNA), required for stable association of tmRNA with ribosomes. tmRNA and SmpB together mimic tRNA shape, replacing the anticodon stem-loop with SmpB. tmRNA is encoded by the ssrA gene; the 2 termini fold to resemble tRNA(Ala) and it encodes a 'tag peptide', a short internal open reading frame. During trans-translation Ala-aminoacylated tmRNA acts like a tRNA, entering the A-site of stalled ribosomes, displacing the stalled mRNA. The ribosome then switches to translate the ORF on the tmRNA; the nascent peptide is terminated with the 'tag peptide' encoded by the tmRNA and targeted for degradation. The ribosome is freed to recommence translation, which seems to be the essential function of trans-translation. This chain is SsrA-binding protein, found in Coxiella burnetii (strain RSA 331 / Henzerling II).